The following is a 192-amino-acid chain: Large ribosomal subunit protein bL25 (192 aa).

This sequence belongs to the bacterial ribosomal protein bL25 family. CTC subfamily. Part of the 50S ribosomal subunit; part of the 5S rRNA/L5/L18/L25 subcomplex. Contacts the 5S rRNA. Binds to the 5S rRNA independently of L5 and L18.

In terms of biological role, this is one of the proteins that binds to the 5S RNA in the ribosome where it forms part of the central protuberance. The protein is Large ribosomal subunit protein bL25 of Solidesulfovibrio magneticus (strain ATCC 700980 / DSM 13731 / RS-1) (Desulfovibrio magneticus).